The primary structure comprises 262 residues: Methanethiol S-methyltransferase (262 aa).

Transmembrane regions (helical) follow at residues 22–42, 55–75, 100–120, 134–154, and 195–215; these read LYSLLSYLFFLMTLLYLIGFV, PGASWPLALLVDVLLITLFAV, ATYVLASSVVLVVMFWLWQPI, AVLTTLFWLGWGLILVATFLI, and GFLMAFWATPEMTVGHLVFAL.

It belongs to the nurim family.

Its subcellular location is the membrane. It catalyses the reaction methanethiol + S-adenosyl-L-methionine = dimethyl sulfide + S-adenosyl-L-homocysteine + H(+). Catalyzes the methylation of methanethiol (MeSH) to yield dimethylsulphide (DMS). This is Methanethiol S-methyltransferase from Pseudomonas deceptionensis.